A 189-amino-acid chain; its full sequence is DFLFARTMIGVFKNIEIMCNKGSSQTWGKEAWKKIVVCIVSDRRAKINPRTRAVLAGLGVYQDGIAKQQVNGKDVTAHIYEYTTQVGIDLKGTQVSLRPKGATPVQLLFCLKEKIRRKINSHRWFFQAFGRVLDPNICVLIDAGTKPGKDSIYHLWKAFDLEPMIGGACGEIKVMLEHGKKLYNPLVAT.

The protein belongs to the chitin synthase family.

It localises to the cell membrane. It catalyses the reaction [(1-&gt;4)-N-acetyl-beta-D-glucosaminyl](n) + UDP-N-acetyl-alpha-D-glucosamine = [(1-&gt;4)-N-acetyl-beta-D-glucosaminyl](n+1) + UDP + H(+). Functionally, polymerizes chitin, a structural polymer of the cell wall and septum, by transferring the sugar moiety of UDP-GlcNAc to the non-reducing end of the growing chitin polymer. The chain is Chitin synthase 1 (CHS1) from Xylohypha bantiana.